A 1011-amino-acid chain; its full sequence is Multiple C2 domain and transmembrane region protein 7 (1011 aa).

Residues 1-110 (MMMSNLKLGV…PHSDAVVLHF (110 aa)) enclose the C2 1 domain. The span at 178 to 195 (QEHQHQHPQGPNQSSSLA) shows a compositional bias: polar residues. The segment at 178–201 (QEHQHQHPQGPNQSSSLAAEQDNH) is disordered. 3 C2 domains span residues 261-381 (IHKD…PQWY), 421-546 (VDCS…ARWY), and 587-709 (YSSD…THSY). 5 residues coordinate Ca(2+): aspartate 294, aspartate 300, aspartate 347, aspartate 349, and aspartate 354. Helical transmembrane passes span 812-832 (MMTVFSGVIAVGKWFSDICSW), 846-866 (LMLVCLPELILPTMFLYMFLI), and 954-974 (IFVILCFIAAIVFFITPIQIV).

Belongs to the MCTP family. It depends on Ca(2+) as a cofactor. In terms of tissue distribution, accumulates specifically in hydathodes. Restricted the basal meristem of roots. Observed in flowers.

It localises to the membrane. The protein resides in the vesicle. It is found in the endosome membrane. May function as a signaling molecule by regulating the trafficking of other regulators. This Arabidopsis thaliana (Mouse-ear cress) protein is Multiple C2 domain and transmembrane region protein 7.